The following is a 289-amino-acid chain: Protease HtpX homolog (289 aa).

The next 2 helical transmembrane spans lie at 3-23 (IVGT…WFFF) and 28-48 (TILA…YKVG). Position 129 (H129) interacts with Zn(2+). E130 is an active-site residue. H133 is a binding site for Zn(2+). 2 consecutive transmembrane segments (helical) span residues 144–164 (LGQG…LFSG) and 172–192 (FLAI…VLAI). E197 provides a ligand contact to Zn(2+). Residues 222–250 (SQGNEQAAQQQRQRTSRGRGRRQRGQRND) form a disordered region. Over residues 235 to 246 (RTSRGRGRRQRG) the composition is skewed to basic residues.

This sequence belongs to the peptidase M48B family. Zn(2+) serves as cofactor.

It localises to the cell membrane. This Halobacterium salinarum (strain ATCC 700922 / JCM 11081 / NRC-1) (Halobacterium halobium) protein is Protease HtpX homolog.